The chain runs to 210 residues: Protein DrgA (210 aa).

Belongs to the nitroreductase family. The cofactor is FMN.

Its function is as follows. Controls resistance to the herbicide Dinoseb and metronidazole. Involved in detoxification of Dinoseb via the reduction of the nitro group(s) and this process is accompanied by the formation of toxic superoxide anions. The polypeptide is Protein DrgA (drgA) (Synechocystis sp. (strain ATCC 27184 / PCC 6803 / Kazusa)).